Consider the following 509-residue polypeptide: MAAIGVHLGCTSACVAVYKDGRAGVVANDAGDRVTPAVVAYSENEEIVGLAAKQSRIRNISNTVMKVKQILGRSSNDPQAQKYIVESKCLVIEKNGKLRYEIDTGEETKLVNPEDVARLIFSKMKETAHSVLGSDANDVVITVPFDFGEKQKNALGEAARAAGFNVLRLIHEPSAALLAYGIGQDSPTGKSNILVFKLGGTSLSLSIMEVNSGIYRVLSTNTDDNIGGAHFTETLAQYLASEFQRSFKYDVRGNARAMMKLMNSAEVAKHSLSTLGSANCFLDSLYEGQDFDCNVSRARFELLCSPLFNKCIEAIRGLLDQSGFTADDINKVVLCGGSSRIPKLQQLIKDIFPAVELLNSIPPDEVIPIGAAIEAGILIGKENLLVEDSLMIECSARDILVKGVDESGASRFTVLFPSGTPLPARRQHTLQAPGSISSVCLELYESDGKNSAKEETKFAQVVLQDLDKKENGLRDILAVLTMKRDGSLHVTCTDQETGKCEAISIEVAS.

Belongs to the heat shock protein 70 family. As to quaternary structure, component of ribosome-associated complex (RAC), a heterodimer composed of Hsp70/DnaK-type chaperone HSPA14 and Hsp40/DnaJ-type chaperone DNAJC2.

It localises to the cytoplasm. It is found in the cytosol. Its function is as follows. Component of the ribosome-associated complex (RAC), a complex involved in folding or maintaining nascent polypeptides in a folding-competent state. In the RAC complex, binds to the nascent polypeptide chain, while DNAJC2 stimulates its ATPase activity. The chain is Heat shock 70 kDa protein 14 (HSPA14) from Pongo abelii (Sumatran orangutan).